The sequence spans 149 residues: Large ribosomal subunit protein bL9 (149 aa).

Belongs to the bacterial ribosomal protein bL9 family.

Binds to the 23S rRNA. The chain is Large ribosomal subunit protein bL9 from Persephonella marina (strain DSM 14350 / EX-H1).